Here is a 276-residue protein sequence, read N- to C-terminus: Diaminopimelate epimerase (276 aa).

Residues N13, Q46, and N66 each contribute to the substrate site. C75 acts as the Proton donor in catalysis. Substrate is bound by residues 76–77 (GN), N159, N192, and 210–211 (ER). C219 serves as the catalytic Proton acceptor. 220-221 (GS) provides a ligand contact to substrate.

Belongs to the diaminopimelate epimerase family. In terms of assembly, homodimer.

The protein localises to the cytoplasm. It carries out the reaction (2S,6S)-2,6-diaminopimelate = meso-2,6-diaminopimelate. The protein operates within amino-acid biosynthesis; L-lysine biosynthesis via DAP pathway; DL-2,6-diaminopimelate from LL-2,6-diaminopimelate: step 1/1. Its function is as follows. Catalyzes the stereoinversion of LL-2,6-diaminopimelate (L,L-DAP) to meso-diaminopimelate (meso-DAP), a precursor of L-lysine and an essential component of the bacterial peptidoglycan. The polypeptide is Diaminopimelate epimerase (Vibrio cholerae serotype O1 (strain ATCC 39541 / Classical Ogawa 395 / O395)).